Here is a 476-residue protein sequence, read N- to C-terminus: Glycogen synthase (476 aa).

Lys-15 lines the ADP-alpha-D-glucose pocket.

Belongs to the glycosyltransferase 1 family. Bacterial/plant glycogen synthase subfamily.

It catalyses the reaction [(1-&gt;4)-alpha-D-glucosyl](n) + ADP-alpha-D-glucose = [(1-&gt;4)-alpha-D-glucosyl](n+1) + ADP + H(+). It functions in the pathway glycan biosynthesis; glycogen biosynthesis. In terms of biological role, synthesizes alpha-1,4-glucan chains using ADP-glucose. This is Glycogen synthase from Haemophilus influenzae (strain PittGG).